The chain runs to 314 residues: uncharacterized protein (314 aa).

Residues 1–70 (MAGNSQRRGA…QGRHKKTDDT (70 aa)) form a disordered region. Over residues 44 to 65 (RPHHPAGKRAAKAARQAQGRHK) the composition is skewed to basic residues. Glycine 265, isoleucine 285, and leucine 294 together coordinate S-adenosyl-L-methionine.

This sequence belongs to the class IV-like SAM-binding methyltransferase superfamily. RNA methyltransferase TrmH family.

This is an uncharacterized protein from Mycolicibacterium gilvum (strain PYR-GCK) (Mycobacterium gilvum (strain PYR-GCK)).